We begin with the raw amino-acid sequence, 361 residues long: Phosphoserine aminotransferase (361 aa).

Arg-43 lines the L-glutamate pocket. Residues 77 to 78 (AS), Trp-103, Thr-153, Asp-173, and Gln-196 contribute to the pyridoxal 5'-phosphate site. Lys-197 is modified (N6-(pyridoxal phosphate)lysine). 238 to 239 (NT) lines the pyridoxal 5'-phosphate pocket.

The protein belongs to the class-V pyridoxal-phosphate-dependent aminotransferase family. SerC subfamily. As to quaternary structure, homodimer. Pyridoxal 5'-phosphate serves as cofactor.

It localises to the cytoplasm. It carries out the reaction O-phospho-L-serine + 2-oxoglutarate = 3-phosphooxypyruvate + L-glutamate. The catalysed reaction is 4-(phosphooxy)-L-threonine + 2-oxoglutarate = (R)-3-hydroxy-2-oxo-4-phosphooxybutanoate + L-glutamate. Its pathway is amino-acid biosynthesis; L-serine biosynthesis; L-serine from 3-phospho-D-glycerate: step 2/3. It functions in the pathway cofactor biosynthesis; pyridoxine 5'-phosphate biosynthesis; pyridoxine 5'-phosphate from D-erythrose 4-phosphate: step 3/5. Functionally, catalyzes the reversible conversion of 3-phosphohydroxypyruvate to phosphoserine and of 3-hydroxy-2-oxo-4-phosphonooxybutanoate to phosphohydroxythreonine. This is Phosphoserine aminotransferase from Pseudomonas fluorescens (strain SBW25).